We begin with the raw amino-acid sequence, 236 residues long: Baculoviral IAP repeat-containing protein 8 (236 aa).

The stretch at 7-70 (RLITFGTWMY…KWYPGCKYLL (64 aa)) is one BIR repeat. Zn(2+) is bound by residues Cys-39, Cys-42, His-59, and Cys-66. Residues 189–224 (CKICMDRHIAVVFIPCGHLVTCKQCAEAVDRCPMCS) form an RING-type zinc finger.

This sequence belongs to the IAP family. In terms of assembly, binds to caspase-9. As to expression, testis specific in normal tissues.

It is found in the cytoplasm. Functionally, protects against apoptosis mediated by BAX. This chain is Baculoviral IAP repeat-containing protein 8 (BIRC8), found in Homo sapiens (Human).